Here is a 130-residue protein sequence, read N- to C-terminus: Fluoride-specific ion channel FluC (130 aa).

4 helical membrane passes run 3-23 (FVFL…YFVG), 38-58 (LGTF…GHLA), 67-87 (FGIF…SYGL), and 102-122 (VSYV…GWFL). Positions 77 and 80 each coordinate Na(+).

The protein belongs to the fluoride channel Fluc/FEX (TC 1.A.43) family.

It localises to the cell inner membrane. The catalysed reaction is fluoride(in) = fluoride(out). Na(+) is not transported, but it plays an essential structural role and its presence is essential for fluoride channel function. In terms of biological role, fluoride-specific ion channel. Important for reducing fluoride concentration in the cell, thus reducing its toxicity. The polypeptide is Fluoride-specific ion channel FluC (Helicobacter pylori (strain HPAG1)).